The chain runs to 347 residues: Phosphoribosylformylglycinamidine cyclo-ligase (347 aa).

This sequence belongs to the AIR synthase family.

The protein localises to the cytoplasm. The enzyme catalyses 2-formamido-N(1)-(5-O-phospho-beta-D-ribosyl)acetamidine + ATP = 5-amino-1-(5-phospho-beta-D-ribosyl)imidazole + ADP + phosphate + H(+). Its pathway is purine metabolism; IMP biosynthesis via de novo pathway; 5-amino-1-(5-phospho-D-ribosyl)imidazole from N(2)-formyl-N(1)-(5-phospho-D-ribosyl)glycinamide: step 2/2. The chain is Phosphoribosylformylglycinamidine cyclo-ligase from Yersinia pseudotuberculosis serotype IB (strain PB1/+).